Reading from the N-terminus, the 479-residue chain is Glutamate--tRNA ligase (479 aa).

The short motif at 9-19 is the 'HIGH' region element; it reads PSPTGLFHIGT. Positions 248–252 match the 'KMSKS' region motif; that stretch reads KLSKR. Lysine 251 lines the ATP pocket.

The protein belongs to the class-I aminoacyl-tRNA synthetase family. Glutamate--tRNA ligase type 1 subfamily. Monomer.

It is found in the cytoplasm. The enzyme catalyses tRNA(Glu) + L-glutamate + ATP = L-glutamyl-tRNA(Glu) + AMP + diphosphate. Its function is as follows. Catalyzes the attachment of glutamate to tRNA(Glu) in a two-step reaction: glutamate is first activated by ATP to form Glu-AMP and then transferred to the acceptor end of tRNA(Glu). In Prochlorococcus marinus (strain MIT 9215), this protein is Glutamate--tRNA ligase.